The sequence spans 530 residues: UDP-glucuronosyltransferase 2B17 (530 aa).

The N-terminal stretch at 1–23 (MPGKWISALLLLQISCCFQSGNC) is a signal peptide. A helical transmembrane segment spans residues 494-510 (VIGFLLTCSAVIAVLTV).

It belongs to the UDP-glycosyltransferase family.

The protein localises to the endoplasmic reticulum membrane. It carries out the reaction glucuronate acceptor + UDP-alpha-D-glucuronate = acceptor beta-D-glucuronoside + UDP + H(+). The enzyme catalyses 17alpha-estradiol + UDP-alpha-D-glucuronate = 17alpha-estradiol 3-O-(beta-D-glucuronate) + UDP + H(+). It catalyses the reaction 17alpha-estradiol + UDP-alpha-D-glucuronate = 17alpha-estradiol 17-O-(beta-D-glucuronate) + UDP + H(+). The catalysed reaction is 17beta-estradiol + UDP-alpha-D-glucuronate = 17beta-estradiol 17-O-(beta-D-glucuronate) + UDP + H(+). It carries out the reaction 17beta-hydroxy-5alpha-androstan-3-one + UDP-alpha-D-glucuronate = 5alpha-dihydrotestosterone 17-O-(beta-D-glucuronate) + UDP + H(+). The enzyme catalyses testosterone + UDP-alpha-D-glucuronate = testosterone 17-O-(beta-D-glucuronate) + UDP + H(+). Its function is as follows. UDP-glucuronosyltransferase (UGT) that catalyzes phase II biotransformation reactions in which lipophilic substrates are conjugated with glucuronic acid to increase the metabolite's water solubility, thereby facilitating excretion into either the urine or bile. Catalyzes the glucuronidation of endogenous steroid hormones such as androgens (epitestosterone, androsterone) and estrogens (estradiol, epiestradiol). The sequence is that of UDP-glucuronosyltransferase 2B17 from Rattus norvegicus (Rat).